The primary structure comprises 232 residues: Ribonuclease P protein component 3 (232 aa).

The protein belongs to the eukaryotic/archaeal RNase P protein component 3 family. In terms of assembly, consists of a catalytic RNA component and at least 5 protein subunits.

It localises to the cytoplasm. The enzyme catalyses Endonucleolytic cleavage of RNA, removing 5'-extranucleotides from tRNA precursor.. Part of ribonuclease P, a protein complex that generates mature tRNA molecules by cleaving their 5'-ends. This is Ribonuclease P protein component 3 from Methanococcus maripaludis (strain DSM 14266 / JCM 13030 / NBRC 101832 / S2 / LL).